The primary structure comprises 240 residues: Transcriptional regulatory protein ChvI (240 aa).

Residues 3–116 (TIALVDDDRN…LLVERVKAIL (114 aa)) enclose the Response regulatory domain. Residues aspartate 8, aspartate 9, and aspartate 52 each coordinate Mg(2+). Aspartate 52 bears the 4-aspartylphosphate mark. A DNA-binding region (ompR/PhoB-type) is located at residues 139–238 (SRSLERGQLV…LYGVGYRFRE (100 aa)).

Mg(2+) serves as cofactor. In terms of processing, phosphorylated by ChvG.

The protein localises to the cytoplasm. Its pathway is glycan metabolism; exopolysaccharide biosynthesis. In terms of biological role, member of a two-component regulatory system ChvG(ExoS)/ChvI involved in regulating the production of succinoglycan. The chain is Transcriptional regulatory protein ChvI (chvI) from Rhizobium meliloti (strain 1021) (Ensifer meliloti).